We begin with the raw amino-acid sequence, 106 residues long: Protein RnfH (106 aa).

It belongs to the UPF0125 (RnfH) family.

This Ectopseudomonas mendocina (strain ymp) (Pseudomonas mendocina) protein is Protein RnfH.